The primary structure comprises 116 residues: Large ribosomal subunit protein bL19 (116 aa).

It belongs to the bacterial ribosomal protein bL19 family.

This protein is located at the 30S-50S ribosomal subunit interface and may play a role in the structure and function of the aminoacyl-tRNA binding site. The protein is Large ribosomal subunit protein bL19 of Staphylococcus saprophyticus subsp. saprophyticus (strain ATCC 15305 / DSM 20229 / NCIMB 8711 / NCTC 7292 / S-41).